The following is a 201-amino-acid chain: Imidazoleglycerol-phosphate dehydratase (201 aa).

It belongs to the imidazoleglycerol-phosphate dehydratase family.

The protein localises to the cytoplasm. It carries out the reaction D-erythro-1-(imidazol-4-yl)glycerol 3-phosphate = 3-(imidazol-4-yl)-2-oxopropyl phosphate + H2O. The protein operates within amino-acid biosynthesis; L-histidine biosynthesis; L-histidine from 5-phospho-alpha-D-ribose 1-diphosphate: step 6/9. This is Imidazoleglycerol-phosphate dehydratase from Prochlorococcus marinus (strain MIT 9515).